The sequence spans 364 residues: 3-dehydroquinate synthase (364 aa).

Residues Asp-73–Lys-78, Gly-107–Asp-111, Thr-131–Thr-132, Lys-144, Lys-153, and Cys-171–Thr-174 contribute to the NAD(+) site. Zn(2+) contacts are provided by Glu-186, His-249, and His-266.

This sequence belongs to the sugar phosphate cyclases superfamily. Dehydroquinate synthase family. Requires NAD(+) as cofactor. Co(2+) serves as cofactor. It depends on Zn(2+) as a cofactor.

The protein resides in the cytoplasm. It catalyses the reaction 7-phospho-2-dehydro-3-deoxy-D-arabino-heptonate = 3-dehydroquinate + phosphate. The protein operates within metabolic intermediate biosynthesis; chorismate biosynthesis; chorismate from D-erythrose 4-phosphate and phosphoenolpyruvate: step 2/7. Functionally, catalyzes the conversion of 3-deoxy-D-arabino-heptulosonate 7-phosphate (DAHP) to dehydroquinate (DHQ). In Blochmanniella floridana, this protein is 3-dehydroquinate synthase.